We begin with the raw amino-acid sequence, 298 residues long: Estradiol 17-beta-dehydrogenase 11 (298 aa).

The signal sequence occupies residues 1–21 (MKYLLDLILLLPLLIVFCIES). 40–64 (LITGAGHGIGRLTAYEFAKLNTKLV) contributes to the NADP(+) binding site. Position 172 (Ser-172) interacts with substrate. Tyr-185 functions as the Proton acceptor in the catalytic mechanism.

Belongs to the short-chain dehydrogenases/reductases (SDR) family. 17-beta-HSD 3 subfamily.

Its subcellular location is the endoplasmic reticulum. It localises to the lipid droplet. The catalysed reaction is 17beta-estradiol + NAD(+) = estrone + NADH + H(+). It carries out the reaction 17beta-estradiol + NADP(+) = estrone + NADPH + H(+). Its function is as follows. Can convert androstan-3-alpha,17-beta-diol (3-alpha-diol) to androsterone in vitro, suggesting that it may participate in androgen metabolism during steroidogenesis. May act by metabolizing compounds that stimulate steroid synthesis and/or by generating metabolites that inhibit it. Has no activity toward DHEA (dehydroepiandrosterone), or A-dione (4-androste-3,17-dione), and only a slight activity toward testosterone to A-dione. The sequence is that of Estradiol 17-beta-dehydrogenase 11 (Hsd17b11) from Rattus norvegicus (Rat).